The sequence spans 68 residues: Beta-defensin 1 (68 aa).

The N-terminal stretch at 1 to 21 is a signal peptide; the sequence is MRTSYLLLFTLCLLLSEMASG. Positions 22-32 are excised as a propeptide; the sequence is GNFLTGLGHRS. Intrachain disulfides connect C37/C66, C44/C59, and C49/C67.

It belongs to the beta-defensin family. In terms of assembly, monomer. Homodimer.

It is found in the secreted. The protein resides in the membrane. In terms of biological role, has bactericidal activity. May act as a ligand for C-C chemokine receptor CCR6. Positively regulates the sperm motility and bactericidal activity in a CCR6-dependent manner. Binds to CCR6 and triggers Ca2+ mobilization in the sperm which is important for its motility. In Pan troglodytes (Chimpanzee), this protein is Beta-defensin 1 (DEFB1).